Here is a 170-residue protein sequence, read N- to C-terminus: Cytochrome bc1 complex Rieske iron-sulfur subunit (170 aa).

One can recognise a Rieske domain in the interval 63–153; sequence KAALMIIRLE…IGVNDEGYLE (91 aa). The [2Fe-2S] cluster site is built by cysteine 96, histidine 98, cysteine 115, and histidine 118. Cysteines 101 and 117 form a disulfide.

As to quaternary structure, the cytochrome bc1 complex is composed of a cytochrome b (QcrB), the Rieske iron-sulfur protein (QcrA) and a diheme cytochrome c (QcrC) subunit. Requires [2Fe-2S] cluster as cofactor.

Its subcellular location is the cell membrane. In terms of biological role, iron-sulfur subunit of the cytochrome bc1 complex, an essential component of the respiratory electron transport chain required for ATP synthesis. The bc1 complex catalyzes the oxidation of menaquinol and the reduction of cytochrome c in the respiratory chain. The bc1 complex operates through a Q-cycle mechanism that couples electron transfer to generation of the proton gradient that drives ATP synthesis. This Streptomyces lividans protein is Cytochrome bc1 complex Rieske iron-sulfur subunit (qcrA).